Here is a 441-residue protein sequence, read N- to C-terminus: G-protein coupled receptor family C group 5 member C (441 aa).

The first 22 residues, 1 to 22 (MATHKTLLMCLGLPLFFPGALA), serve as a signal peptide directing secretion. Residues 23–49 (QNHAPPGCSPDLDPLYYNLCDRSGAWG) lie on the Extracellular side of the membrane. The chain crosses the membrane as a helical span at residues 50 to 70 (IVLEAVAGAGIITTFVLTIIL). Residues 71-84 (VASLPFVQDTKKRS) are Cytoplasmic-facing. A helical transmembrane segment spans residues 85 to 105 (LLGTQVFFLLGTLGLFCLVFA). The Extracellular portion of the chain corresponds to 106 to 119 (CVVKPDFSTCASRR). A helical membrane pass occupies residues 120–140 (FLFGVLFAICFSCLIAHTLSL). At 141 to 154 (NFLARKNHGPRGWV) the chain is on the cytoplasmic side. A helical membrane pass occupies residues 155–175 (IFTVALLLTLVEVIINTEWLI). At 176–207 (ITLVRGGGQVSTPGNGSADWTVTSPCAIANMD) the chain is on the extracellular side. Residue asparagine 190 is glycosylated (N-linked (GlcNAc...) asparagine). Residues 208-228 (FVMALIYVMLLLLAAFLGAWP) traverse the membrane as a helical segment. The Cytoplasmic segment spans residues 229 to 240 (TLCGRFKRWRKH). Residues 241 to 261 (GVFVLLTTATSIAIWVVWIVM) traverse the membrane as a helical segment. Topologically, residues 262–278 (YTYGNKQHHSPTWDDPT) are extracellular. The helical transmembrane segment at 279–299 (LAIALAANAWTFVFFYVIPEV) threads the bilayer. Residues 300–441 (SQVTKPSPEQ…DQSPKNKTRW (142 aa)) lie on the Cytoplasmic side of the membrane. Residues serine 343, serine 382, serine 402, and serine 405 each carry the phosphoserine modification. Position 413 is a phosphotyrosine (tyrosine 413). The tract at residues 419–441 (QVATPTKDGKISQDQSPKNKTRW) is disordered. Residue threonine 422 is modified to Phosphothreonine. The span at 430 to 441 (SQDQSPKNKTRW) shows a compositional bias: polar residues. Serine 434 bears the Phosphoserine mark.

Belongs to the G-protein coupled receptor 3 family.

It localises to the cell membrane. This retinoic acid-inducible G-protein coupled receptor provide evidence for a possible interaction between retinoid and G-protein signaling pathways. In Rattus norvegicus (Rat), this protein is G-protein coupled receptor family C group 5 member C (Gprc5c).